Here is a 354-residue protein sequence, read N- to C-terminus: DNA polymerase IV (354 aa).

A UmuC domain is found at 3-188 (VIFVDFDYFF…LDIDEIPGIG (186 aa)). Positions 7 and 105 each coordinate Mg(2+). Glu-106 is a catalytic residue.

The protein belongs to the DNA polymerase type-Y family. As to quaternary structure, monomer. Mg(2+) serves as cofactor.

The protein resides in the cytoplasm. The catalysed reaction is DNA(n) + a 2'-deoxyribonucleoside 5'-triphosphate = DNA(n+1) + diphosphate. In terms of biological role, poorly processive, error-prone DNA polymerase involved in untargeted mutagenesis. Copies undamaged DNA at stalled replication forks, which arise in vivo from mismatched or misaligned primer ends. These misaligned primers can be extended by PolIV. Exhibits no 3'-5' exonuclease (proofreading) activity. May be involved in translesional synthesis. In Sulfolobus acidocaldarius (strain ATCC 33909 / DSM 639 / JCM 8929 / NBRC 15157 / NCIMB 11770), this protein is DNA polymerase IV.